The sequence spans 503 residues: Glycerol kinase (503 aa).

Threonine 14 is an ADP binding site. Positions 14, 15, and 16 each coordinate ATP. A sn-glycerol 3-phosphate-binding site is contributed by threonine 14. An ADP-binding site is contributed by arginine 18. Sn-glycerol 3-phosphate contacts are provided by arginine 84, glutamate 85, tyrosine 136, and aspartate 246. Glycerol contacts are provided by arginine 84, glutamate 85, tyrosine 136, aspartate 246, and glutamine 247. ADP contacts are provided by threonine 268 and glycine 311. Positions 268, 311, 315, and 412 each coordinate ATP. The ADP site is built by glycine 412 and asparagine 416.

The protein belongs to the FGGY kinase family.

It carries out the reaction glycerol + ATP = sn-glycerol 3-phosphate + ADP + H(+). The protein operates within polyol metabolism; glycerol degradation via glycerol kinase pathway; sn-glycerol 3-phosphate from glycerol: step 1/1. Its activity is regulated as follows. Inhibited by fructose 1,6-bisphosphate (FBP). Functionally, key enzyme in the regulation of glycerol uptake and metabolism. Catalyzes the phosphorylation of glycerol to yield sn-glycerol 3-phosphate. The sequence is that of Glycerol kinase from Haemophilus influenzae (strain PittGG).